The primary structure comprises 121 residues: Small ribosomal subunit protein uS13 (121 aa).

The segment at 94–121 (GLPVRGQRTRTNSRTRKGPKKGAAALKK) is disordered.

The protein belongs to the universal ribosomal protein uS13 family. In terms of assembly, part of the 30S ribosomal subunit. Forms a loose heterodimer with protein S19. Forms two bridges to the 50S subunit in the 70S ribosome.

Functionally, located at the top of the head of the 30S subunit, it contacts several helices of the 16S rRNA. In the 70S ribosome it contacts the 23S rRNA (bridge B1a) and protein L5 of the 50S subunit (bridge B1b), connecting the 2 subunits; these bridges are implicated in subunit movement. Contacts the tRNAs in the A and P-sites. The chain is Small ribosomal subunit protein uS13 from Leptothrix cholodnii (strain ATCC 51168 / LMG 8142 / SP-6) (Leptothrix discophora (strain SP-6)).